The chain runs to 185 residues: Large ribosomal subunit protein eL19 (185 aa).

The tract at residues 152–185 (SDKLTSQQEARRAKNTASRAKRNEKAQIVAKVDV) is disordered.

This sequence belongs to the eukaryotic ribosomal protein eL19 family.

In Tetrahymena thermophila (strain SB210), this protein is Large ribosomal subunit protein eL19 (RPL19).